The sequence spans 185 residues: MLLFFVILGIFVLTILKAISKQRWSWLLLAASALSLELSALYFQHVMQLEPCVMCVYERLAMLGILLAGLIGASSPNNVFIRLSAFLLWGISAVWGILLAIKHTDYQLHPSPFFTCDFFPNFPAWAPLHEWLPWLFNPTGDCSDIVWQFLGYSMPQWLIVSFSLYTLLFIIFAISAVLKTKKQLF.

The Cytoplasmic segment spans residues 1–25 (MLLFFVILGIFVLTILKAISKQRWS). Residues 26 to 42 (WLLLAASALSLELSALY) traverse the membrane as a helical segment. Residues 43-60 (FQHVMQLEPCVMCVYERL) lie on the Periplasmic side of the membrane. Cys52 and Cys55 are disulfide-bonded. The chain crosses the membrane as a helical span at residues 61–76 (AMLGILLAGLIGASSP). Residues 77–83 (NNVFIRL) lie on the Cytoplasmic side of the membrane. Residues 84–101 (SAFLLWGISAVWGILLAI) traverse the membrane as a helical segment. Over 102–156 (KHTDYQLHPSPFFTCDFFPNFPAWAPLHEWLPWLFNPTGDCSDIVWQFLGYSMPQ) the chain is Periplasmic. A disulfide bond links Cys116 and Cys142. Residues 157–175 (WLIVSFSLYTLLFIIFAIS) traverse the membrane as a helical segment. At 176–185 (AVLKTKKQLF) the chain is on the cytoplasmic side.

Belongs to the DsbB family.

Its subcellular location is the cell inner membrane. In terms of biological role, required for disulfide bond formation in some periplasmic proteins. Acts by oxidizing the DsbA protein. The sequence is that of Disulfide bond formation protein B from Psychromonas ingrahamii (strain DSM 17664 / CCUG 51855 / 37).